We begin with the raw amino-acid sequence, 147 residues long: Peptide methionine sulfoxide reductase MsrB (147 aa).

A compositionally biased stretch (basic and acidic residues) spans 1 to 11 (MPKIVKKEPKF). The tract at residues 1–25 (MPKIVKKEPKFVEQSGKKVTKSDEQ) is disordered. Residues 23-145 (DEQWREQLSD…NSVSLIFNKS (123 aa)) form the MsrB domain. 4 residues coordinate Zn(2+): Cys-62, Cys-65, Cys-111, and Cys-114. Cys-134 serves as the catalytic Nucleophile.

It belongs to the MsrB Met sulfoxide reductase family. The cofactor is Zn(2+).

It carries out the reaction L-methionyl-[protein] + [thioredoxin]-disulfide + H2O = L-methionyl-(R)-S-oxide-[protein] + [thioredoxin]-dithiol. This chain is Peptide methionine sulfoxide reductase MsrB, found in Vibrio parahaemolyticus serotype O3:K6 (strain RIMD 2210633).